Here is a 551-residue protein sequence, read N- to C-terminus: Synapse-associated protein of 47 kDa (551 aa).

Disordered stretches follow at residues 20 to 72 (AGDE…AGKR) and 117 to 198 (AMPA…GQGK). Composition is skewed to low complexity over residues 26–59 (PAPTGDAPAAAPAASTSVEATASSAVDPEAAAAA), 117–128 (AMPAMPSIPSIP), and 137–146 (DGAEGAEGAV). A phosphoserine mark is found at Ser-178 and Ser-182. The span at 182 to 197 (SGGGTPTGDEGQIGQG) shows a compositional bias: gly residues. At Thr-186 the chain carries Phosphothreonine. The region spanning 295-347 (VDFEFSYDTAYPTAIAIMAEDKALETMRFELVPKIITEENFWRNYFYRVSLII) is the BSD domain. The interval 360–391 (VGQASSGEDANEVATKEKKSKTAEPAKGDSSV) is disordered. The span at 373–386 (ATKEKKSKTAEPAK) shows a compositional bias: basic and acidic residues. Phosphoserine is present on Ser-433. Positions 487–551 (KDYEVVDEGG…DLIEDTDDLK (65 aa)) are disordered. Over residues 514–523 (DDTEADEDEP) the composition is skewed to acidic residues. A compositionally biased stretch (polar residues) spans 524-535 (TISNLRTRSTNN). Thr-530 is subject to Phosphothreonine. The span at 536 to 551 (DWEEYADLIEDTDDLK) shows a compositional bias: acidic residues.

In terms of tissue distribution, expressed specifically in neurons and transported to synaptic terminals.

The sequence is that of Synapse-associated protein of 47 kDa (Sap47) from Drosophila melanogaster (Fruit fly).